A 133-amino-acid polypeptide reads, in one-letter code: Small ribosomal subunit protein uS8c (133 aa).

The protein belongs to the universal ribosomal protein uS8 family. Part of the 30S ribosomal subunit.

The protein resides in the plastid. Its subcellular location is the chloroplast. Functionally, one of the primary rRNA binding proteins, it binds directly to 16S rRNA central domain where it helps coordinate assembly of the platform of the 30S subunit. This is Small ribosomal subunit protein uS8c (rps8) from Pyropia yezoensis (Susabi-nori).